The chain runs to 134 residues: Small ribosomal subunit protein uS11 (134 aa).

Disordered regions lie at residues 1 to 22 (MPPK…KNVA) and 114 to 134 (SIQD…RRRV). Over residues 9 to 22 (AAKKVRRKEKKNVA) the composition is skewed to basic residues.

The protein belongs to the universal ribosomal protein uS11 family. In terms of assembly, part of the 30S ribosomal subunit. Interacts with proteins S7 and S18. Binds to IF-3.

Its function is as follows. Located on the platform of the 30S subunit, it bridges several disparate RNA helices of the 16S rRNA. Forms part of the Shine-Dalgarno cleft in the 70S ribosome. The polypeptide is Small ribosomal subunit protein uS11 (Streptomyces coelicolor (strain ATCC BAA-471 / A3(2) / M145)).